Here is a 365-residue protein sequence, read N- to C-terminus: MDNYEYTELLKNLSKKMSNITGVVEPDKLYKRVAQIDELENSQDFWNDSSNAALVQKDKTQCERKLKKYNLAKNAIDDAKELYEMAKEENDEDLIAECFNGAQHIEDLIRTMEIEVLLSEETDGNNAILSIHPGAGGTESQDWASILLRMYKRFAERRGWSVEVLDYQAGDEAGIKDVSLLISGENAYGYLKVENGIHRLVRISPFDSNAKRHTSFSSVMVSPEVDDDINIVIEDRDIRVDTYRSSGAGGQHVNKTESAIRITHIATGVVVQCQNDRSQHKNRATAMKMLKSRLYELELENQKAEIAGIAKSEIGWGHQIRSYVMQPYQQIKDTRSNIAYSNVSAILDGDIDKMIEDVLISQNRS.

An N5-methylglutamine modification is found at Q251.

The protein belongs to the prokaryotic/mitochondrial release factor family. Methylated by PrmC. Methylation increases the termination efficiency of RF2.

The protein localises to the cytoplasm. In terms of biological role, peptide chain release factor 2 directs the termination of translation in response to the peptide chain termination codons UGA and UAA. This Sulfurimonas denitrificans (strain ATCC 33889 / DSM 1251) (Thiomicrospira denitrificans (strain ATCC 33889 / DSM 1251)) protein is Peptide chain release factor 2.